The following is a 327-amino-acid chain: GMP reductase (327 aa).

C176 (thioimidate intermediate) is an active-site residue. Residue 205-228 (IIADGGIRTHGDIAKSIRFGASMV) participates in NADP(+) binding.

Belongs to the IMPDH/GMPR family. GuaC type 2 subfamily.

It carries out the reaction IMP + NH4(+) + NADP(+) = GMP + NADPH + 2 H(+). Its function is as follows. Catalyzes the irreversible NADPH-dependent deamination of GMP to IMP. It functions in the conversion of nucleobase, nucleoside and nucleotide derivatives of G to A nucleotides, and in maintaining the intracellular balance of A and G nucleotides. The polypeptide is GMP reductase (Streptococcus gordonii (strain Challis / ATCC 35105 / BCRC 15272 / CH1 / DL1 / V288)).